The primary structure comprises 355 residues: Lipoyl synthase (355 aa).

One can recognise an RPE1 insert domain in the interval 7–55; sequence HLSKFAYREEFAGNTEVLATAAYKEDCADASTGLTPKLPLEVEFGKMSK. 7 residues coordinate [4Fe-4S] cluster: Cys-86, Cys-91, Cys-97, Cys-112, Cys-116, Cys-119, and Ser-325. In terms of domain architecture, Radical SAM core spans 98-314; that stretch reads WSKKHATVMI…ERVARTKGFL (217 aa).

Belongs to the radical SAM superfamily. Lipoyl synthase family. Requires [4Fe-4S] cluster as cofactor.

The protein localises to the cytoplasm. The catalysed reaction is [[Fe-S] cluster scaffold protein carrying a second [4Fe-4S](2+) cluster] + N(6)-octanoyl-L-lysyl-[protein] + 2 oxidized [2Fe-2S]-[ferredoxin] + 2 S-adenosyl-L-methionine + 4 H(+) = [[Fe-S] cluster scaffold protein] + N(6)-[(R)-dihydrolipoyl]-L-lysyl-[protein] + 4 Fe(3+) + 2 hydrogen sulfide + 2 5'-deoxyadenosine + 2 L-methionine + 2 reduced [2Fe-2S]-[ferredoxin]. It participates in protein modification; protein lipoylation via endogenous pathway; protein N(6)-(lipoyl)lysine from octanoyl-[acyl-carrier-protein]: step 2/2. Catalyzes the radical-mediated insertion of two sulfur atoms into the C-6 and C-8 positions of the octanoyl moiety bound to the lipoyl domains of lipoate-dependent enzymes, thereby converting the octanoylated domains into lipoylated derivatives. The chain is Lipoyl synthase from Rickettsia bellii (strain RML369-C).